The sequence spans 66 residues: Large ribosomal subunit protein uL29 (66 aa).

It belongs to the universal ribosomal protein uL29 family.

In Kosmotoga olearia (strain ATCC BAA-1733 / DSM 21960 / TBF 19.5.1), this protein is Large ribosomal subunit protein uL29.